Here is an 840-residue protein sequence, read N- to C-terminus: MNKDYQIFWPSPSDPVRFEVDTSHEKVESISESDTMNVSNLSQGIMLSDSPICMETTSTTCDLPQNEIKNFERENEYESTLCEDAYGTLDNLLNDNNIENYSKNVLTQPVDTISISSLRQFDTVCKFHCVEAFDDEMTEKPEFQSQVYNYAKDNNIKQDSFREENPMETSVSASTDQLGNEYFRQPPPRSPPLIHCSGETLKFPEKSLAKSTAKESALNPSQPPSFVCKTAVPSKEIQNYGEIPEMSVSYAKEVTAEGVERPEIVSTWSSAGISWRSKASQENCEMPDMEQSAESLQPVQEDMALNEILKKLKHTNRKQEARIQELQCSNLYLEKRVKELQMKTTKQQVFIDVIDKLKENVEELIEEKYKIILEKNDTKKTLQNLQEILANTQKHLQESRNDKEMLQLQFKKIKANYVRLQERYMTEMQQKNKSVSQYLEMDKTLSKKEEEVKRLQQLRKEQEKVTASALDLLKREKETQEQEFLSLQEEFQKRDKANLEERQKLKSRLEKLLTQVKNLQFMSENERAKNIKLQQQINEVKNENKKLKQHVARSEEQNYVPKSETAQLKEQLEEVMKSDITKDTKMTHSNLLLDCSPCEEESLNPADIERSSQLASKMHSLLALMVGLLKCQDITNSDAEHFKESEKVSDIMLQRLKSLHLKKKNLDKELLKHKDRITTFRDLIAKEKAFQDHAIKVTDCDSDEAKSIRDVPTFLGAKLDKYHSLNEELDFLITKLGCLLESKESHCNRLIEENDKYQRHLGSLIKKVTSYEEIIECADQRLAISHSQIAHLEKRNKHLEDLIRKPREKARKPRSKSLENHPKSMTMMPAVFKENRNDLD.

Residues 303 to 559 (MALNEILKKL…HVARSEEQNY (257 aa)) adopt a coiled-coil conformation. The segment at 800-840 (EDLIRKPREKARKPRSKSLENHPKSMTMMPAVFKENRNDLD) is disordered. Residues 806–815 (PREKARKPRS) show a composition bias toward basic residues.

The sequence is that of Cancer-associated gene 1 protein homolog (CAGE1) from Macaca fascicularis (Crab-eating macaque).